We begin with the raw amino-acid sequence, 164 residues long: uncharacterized protein (164 aa).

A disordered region spans residues 144-164 (GFISPEKEHESEDMTSQSLVA).

This is an uncharacterized protein from Synechocystis sp. (strain ATCC 27184 / PCC 6803 / Kazusa).